The sequence spans 448 residues: Trigger factor (448 aa).

Residues 167 to 253 form the PPIase FKBP-type domain; the sequence is GSIVRVDFVE…VKDIKRRDIP (87 aa).

This sequence belongs to the FKBP-type PPIase family. Tig subfamily.

It is found in the cytoplasm. The catalysed reaction is [protein]-peptidylproline (omega=180) = [protein]-peptidylproline (omega=0). Functionally, involved in protein export. Acts as a chaperone by maintaining the newly synthesized protein in an open conformation. Functions as a peptidyl-prolyl cis-trans isomerase. The sequence is that of Trigger factor from Borrelia recurrentis (strain A1).